We begin with the raw amino-acid sequence, 713 residues long: Macrophage-expressed gene 1 protein (713 aa).

The first 19 residues, 1–19 (MNSFMALVLIWMIIACAEA), serve as a signal peptide directing secretion. The MACPF domain occupies 30–345 (GFQICKNALK…TAVRHYYTFN (316 aa)). Residues C34 and C70 are joined by a disulfide bond. A run of 2 beta stranded transmembrane segments spans residues 113–120 (LSINTELA) and 127–132 (GKFSTE). The N-linked (GlcNAc...) asparagine glycan is linked to N185. 2 consecutive transmembrane segments (beta stranded) span residues 235–244 (TVTASAGIAF) and 248–256 (VNFKVETDY). The N-linked (GlcNAc...) asparagine glycan is linked to N269. C350 and C369 form a disulfide bridge. N-linked (GlcNAc...) asparagine glycosylation occurs at N375. 5 disulfide bridges follow: C385–C394, C432–C446, C436–C442, C531–C569, and C554–C574. The segment at 410–653 (PPGYSPVHLL…GDSNGMSGGE (244 aa)) is P2. Residues 654 to 674 (AAGITLGVTIALGIVITLAIY) traverse the membrane as a helical segment.

This sequence belongs to the MPEG1 family. In terms of assembly, homooligomer; predominantly forms a homooligomeric arc-shaped pore complex instead of complete rings of 16 subunits. Proteolytically processed in two steps to generate the Macrophage-expressed gene 1 protein, processed form: cleaved by trypsin in proximity of the helical transmembrane domain releases the ectodomain into the lysosomal lumen to orient the pore-forming domain toward the endogenous membranes, and processed by the asparagine endopeptidase (LGMN). Proteolytic processing in antigen-containing vesicles is pH-dependent. Post-translationally, monoubiquitinated in response to bacterial infection; ubiquitination is required for vesicular localization and antibacterial activity and can be blocked by bacterial cell cycle inhibiting factor (cif). As to expression, expressed constitutively in a variety of cell types including macrophages, microglia, neutrophils, T cells, marginal zone B cells, keratinocytes, splenocytes and intestinal epithelial cells.

It is found in the cytoplasmic vesicle membrane. The protein resides in the cytoplasmic vesicle. The protein localises to the phagosome membrane. Forms arc- and ring-shaped pre-pores on top of the membrane at neutral to slightly acidic pH conditions and converts to pores upon acidification. Undergoes transition from the pre-pore to the pore in a processive clockwise hand-over-hand process. In the pore state, 2 alpha-helical regions refold into transmembrane hairpins (TMH1 and TMH2) in each protomer that form in the ensemble complex giant beta-barrel transmembrane pores. In terms of biological role, pore-forming protein involved in both innate and adaptive immunity. Plays a central role in antigen cross-presentation in dendritic cells by forming a pore in antigen-containing compartments, thereby promoting delivery of antigens for cross-presentation. Also involved in innate immune response following bacterial infection; shows antibacterial activity against a wide spectrum of Gram-positive, Gram-negative and acid-fast bacteria. Reduces the viability of the intracytosolic pathogen L.monocytogenes by inhibiting acidification of the phagocytic vacuole of host cells which restricts bacterial translocation from the vacuole to the cytosol. Required for the antibacterial activity of reactive oxygen species and nitric oxide. Functionally, pore-forming protein that plays a central role in antigen cross-presentation in dendritic cells by mediating delivery of antigens for cross-presentation. Dendritic cells bridge innate and adaptive immunity by capturing exogenous antigens on MHC class-I molecules and presenting them to naive CD8(+) T-cells. Acts by forming a pore in antigen-containing compartments, promoting the release of antigens into the cytosol, enabling generation of MHCI:peptide complexes and T-cell priming. The polypeptide is Macrophage-expressed gene 1 protein (Mus musculus (Mouse)).